Reading from the N-terminus, the 406-residue chain is MSAIDELQALIVELKSELEAQKTETRQQQAQAQQARQRIDRMSAEVVDSNPYSRLMALQRMNIVKDYERIREKTVAVVGVGGVGSVTADMLTRCGIGKLILFDYDKVELANMNRLFFTPDQAGLSKVEAAARTLTFINPDVKIETHNYNITTVDNFDNFLTTISQSGTEPGTPVDLILSCVDNFEARMAINAACNEHSLNWFESGVSENAVSGHIQFIRPGDTACFACAPPLVVAENIDERTLKREGVCAASLPTTMGITAGFLVQNALKYLLNFGEVSDYLGYNALNDFFPKMTLKPNPQCDDRHCLLRQKEFQTKPKPVKKEVEIVAEEPLHATNEWGIELVAEDAPATEDADEPKPIVSDIGEGLRLAYEAPSKSTETTSEATTTTTGDETSLDDLMAQMKSM.

Residues glycine 82, aspartate 103, lysine 126, asparagine 149, and asparagine 183 each contribute to the ATP site. Zn(2+) is bound by residues cysteine 225 and cysteine 228. The Glycyl thioester intermediate role is filled by cysteine 249. Zn(2+) is bound by residues cysteine 302 and cysteine 307. The tract at residues 373-397 is disordered; that stretch reads EAPSKSTETTSEATTTTTGDETSLD. The span at 378-393 shows a compositional bias: low complexity; it reads STETTSEATTTTTGDE.

This sequence belongs to the ubiquitin-activating E1 family. UBA5 subfamily.

In terms of biological role, E1-like enzyme which activates UFM1. In Drosophila willistoni (Fruit fly), this protein is Ubiquitin-like modifier-activating enzyme 5.